We begin with the raw amino-acid sequence, 432 residues long: Major royal jelly protein 1 (432 aa).

Positions 1 to 19 are cleaved as a signal peptide; it reads MTRLFMLVCLGIVCQGTTG. N-linked (GlcNAc...) asparagine glycosylation is found at asparagine 28, asparagine 144, and asparagine 177. 3 disulfide bridges follow: cysteine 118/cysteine 150, cysteine 132/cysteine 195, and cysteine 329/cysteine 416. Proline 364 lines the 24-methylenecholesterol pocket. Histidine 431 is subject to Histidine amide; atypical. Leucine 432 bears the Leucine amide; atypical mark.

Belongs to the major royal jelly protein family. In terms of assembly, is present in royal jelly in different forms: monomer (55 kDa), oligomeric subunit (ca. 287-420 kDa), and water-insoluble aggregates in sediment after interaction with fatty acids. Component of the apisin heterooligomer complex consisting of 4 copies of MRJP1 and 4 copies of apisimin, associated with 8 molecules of 24-methylenecholesterol; apisimin forms a bridge connecting two MRJP1 dimers. At low pH multiple apisin octamers stack to form filaments that increase the viscosity of royal jelly; these filaments may be stabilized by bound fatty acid chains. The mandibular gland, where royal jelly is produced, has low pH conditions favouring filament formation, while the higher pH of the insect midgut favors filament disassembly. Post-translationally, N-glycosylated on Asn-28, Asn-144 and Asn-177. Glycosylation is required to prevent apisin multimers from aggregating. In terms of processing, jellein-2 is probably processed to yield jellein-1 and jellein-4. Found in and secreted from the hypopharyngeal glands of the worker honey bee (at protein level); expression peaks at 12 days post eclosion. Expressed in the brains of worker bees (at protein level); found in antennal lobe, optical lobe and a subpopulation of Kenyon cells in the mushroom body. Found in the ommatidia of worker bees (at protein level). Expressed in the spermatheca of adult queen bees (at protein level); expression levels are higher in mated queens than in virgin queens. Expressed in queen bee ovaries and male drone testes.

The protein resides in the secreted. The protein localises to the cytoplasm. Its subcellular location is the cell projection. It localises to the rhabdomere. It is found in the cytoskeleton. Most abundant protein component of royal jelly, a substance produced in the hypopharyngeal gland containing proteins, free amino acids, fatty acids, sugars and other nutrients, which is fed to developing larvae by worker nurse bees. Major royal jelly proteins (Mrjps) are high in essential amino acids and probably have a nutritional function in larval food. All larvae are fed some royal jelly (also known as worker jelly) early in their development but it forms the principal source of nutrition for larvae destined to become queen bees. Induces the differentiation of honey bee larvae into queens through an Egfr-mediated signaling pathway. Promotes body size increase by activating p70 S6 kinase, stimulates ovary development by augmenting the titer of vitellogenin (Vg) and juvenile hormone, and reduces developmental time by increasing the activity of mitogen-activated protein kinase and inducing 20-hydroxyecdysone (ecdysterone, 20E) production. Together with apisimin forms the apisin complex that polymerizes at low pH, forming a fiber network and increasing the viscosity of royal jelly. The viscous royal Jelly placed in honeycomb cells containing larvae destined to become queens acts as both a food supply and an adhesive preventing larvae from falling out; queens are reared in special large cells oriented vertically. Produced in the spermatheca of adult queen bees, along with other major royal jelly proteins, where it may act as a nutrient supply for sperm stored by mated queens, or be involved in energy metabolism. Functionally, has antibacterial activity against the Gram-positive bacteria S.aureus ATCC 6535, S.saprophyticus and B.subtilis CCT2471, and the Gram-negative bacteria E.coli CCT1371, E.cloacae ATCC 23355, K.pneumoniae ATCC 13883 and P.aeruginosa ATCC 27853, and antifungal activity against C.albicans. Lack cytolytic activity and does not induce rat peritoneal mast cell degranulation. Its function is as follows. Lacks antibacterial and antifungal activity. Lacks cytolytic activity and does not induce rat peritoneal mast cell degranulation. In Apis mellifera (Honeybee), this protein is Major royal jelly protein 1.